A 172-amino-acid chain; its full sequence is Large ribosomal subunit protein bL9 (172 aa).

It belongs to the bacterial ribosomal protein bL9 family.

Its function is as follows. Binds to the 23S rRNA. The sequence is that of Large ribosomal subunit protein bL9 from Chlamydia abortus (strain DSM 27085 / S26/3) (Chlamydophila abortus).